The primary structure comprises 461 residues: Argininosuccinate lyase (461 aa).

Residues S28, N115, and T160 each coordinate 2-(N(omega)-L-arginino)succinate. H161 acts as the Proton acceptor in catalysis. Catalysis depends on S282, which acts as the Proton donor. Positions 290, 322, 327, and 330 each coordinate 2-(N(omega)-L-arginino)succinate.

It belongs to the lyase 1 family. Argininosuccinate lyase subfamily. Homotetramer.

It catalyses the reaction 2-(N(omega)-L-arginino)succinate = fumarate + L-arginine. Its pathway is amino-acid biosynthesis; L-arginine biosynthesis; L-arginine from L-ornithine and carbamoyl phosphate: step 3/3. In Schizosaccharomyces pombe (strain 972 / ATCC 24843) (Fission yeast), this protein is Argininosuccinate lyase (arg7).